A 404-amino-acid polypeptide reads, in one-letter code: Cysteine desulfurase IscS (404 aa).

Residues 75 to 76 (AT), asparagine 155, glutamine 183, and 203 to 205 (SSH) contribute to the pyridoxal 5'-phosphate site. At lysine 206 the chain carries N6-(pyridoxal phosphate)lysine. Threonine 243 contributes to the pyridoxal 5'-phosphate binding site. Cysteine 328 acts as the Cysteine persulfide intermediate in catalysis. Cysteine 328 serves as a coordination point for [2Fe-2S] cluster.

This sequence belongs to the class-V pyridoxal-phosphate-dependent aminotransferase family. NifS/IscS subfamily. Homodimer. Forms a heterotetramer with IscU, interacts with other sulfur acceptors. Pyridoxal 5'-phosphate is required as a cofactor.

It localises to the cytoplasm. The enzyme catalyses (sulfur carrier)-H + L-cysteine = (sulfur carrier)-SH + L-alanine. Its pathway is cofactor biosynthesis; iron-sulfur cluster biosynthesis. Master enzyme that delivers sulfur to a number of partners involved in Fe-S cluster assembly, tRNA modification or cofactor biosynthesis. Catalyzes the removal of elemental sulfur atoms from cysteine to produce alanine. Functions as a sulfur delivery protein for Fe-S cluster synthesis onto IscU, an Fe-S scaffold assembly protein, as well as other S acceptor proteins. The polypeptide is Cysteine desulfurase IscS (Histophilus somni (strain 129Pt) (Haemophilus somnus)).